The following is a 382-amino-acid chain: uncharacterized protein (382 aa).

The next 12 helical transmembrane spans lie at 8–28 (VLLL…LNTL), 39–61 (PTWQ…TLLT), 75–95 (YLAS…VGFW), 102–122 (FIAG…LMCS), 131–151 (LLAA…LMIS), 157–177 (LMSV…PLLF), 204–224 (LGVN…GLMP), 236–256 (GIGF…WPIG), 265–284 (LLVL…AMLG), 289–311 (APAL…AWAC), 325–345 (ALLL…AMLM), and 349–369 (SDNL…LMLL).

The protein belongs to the major facilitator superfamily. YcaD (TC 2.A.1.26) family.

It is found in the cell inner membrane. This is an uncharacterized protein from Enterobacter sp. (strain 638).